A 387-amino-acid polypeptide reads, in one-letter code: Chorismate synthase (387 aa).

2 residues coordinate NADP(+): R39 and R45. Residues 130 to 132, 251 to 252, G295, 310 to 314, and R336 contribute to the FMN site; these read RSS, NA, and KPIPT.

It belongs to the chorismate synthase family. Homotetramer. FMNH2 serves as cofactor.

It carries out the reaction 5-O-(1-carboxyvinyl)-3-phosphoshikimate = chorismate + phosphate. Its pathway is metabolic intermediate biosynthesis; chorismate biosynthesis; chorismate from D-erythrose 4-phosphate and phosphoenolpyruvate: step 7/7. In terms of biological role, catalyzes the anti-1,4-elimination of the C-3 phosphate and the C-6 proR hydrogen from 5-enolpyruvylshikimate-3-phosphate (EPSP) to yield chorismate, which is the branch point compound that serves as the starting substrate for the three terminal pathways of aromatic amino acid biosynthesis. This reaction introduces a second double bond into the aromatic ring system. The protein is Chorismate synthase of Exiguobacterium sp. (strain ATCC BAA-1283 / AT1b).